Consider the following 101-residue polypeptide: Signal recognition particle 19 kDa protein (101 aa).

This sequence belongs to the SRP19 family. In terms of assembly, part of the signal recognition particle protein translocation system, which is composed of SRP and FtsY. Archaeal SRP consists of a 7S RNA molecule of 300 nucleotides and two protein subunits: SRP54 and SRP19.

Its subcellular location is the cytoplasm. In terms of biological role, involved in targeting and insertion of nascent membrane proteins into the cytoplasmic membrane. Binds directly to 7S RNA and mediates binding of the 54 kDa subunit of the SRP. This chain is Signal recognition particle 19 kDa protein, found in Methanosarcina barkeri (strain Fusaro / DSM 804).